The following is a 494-amino-acid chain: UDP-N-acetylmuramate--L-alanine ligase (494 aa).

140 to 146 (GTHGKTT) contributes to the ATP binding site.

The protein belongs to the MurCDEF family.

It localises to the cytoplasm. It carries out the reaction UDP-N-acetyl-alpha-D-muramate + L-alanine + ATP = UDP-N-acetyl-alpha-D-muramoyl-L-alanine + ADP + phosphate + H(+). It participates in cell wall biogenesis; peptidoglycan biosynthesis. In terms of biological role, cell wall formation. The chain is UDP-N-acetylmuramate--L-alanine ligase from Nostoc sp. (strain PCC 7120 / SAG 25.82 / UTEX 2576).